The sequence spans 172 residues: MMEDLKSIIRDIPDFPKKGIVFKDITTLLQDAQSYQRMIDLIAHRYVGQRVDKVVGVEARGFIIGAALAYKLCAGVVLVRKPGKLPSETFSKTYSLEYGTDTLEIHRDAIKPGERVLIADDLLATGGTMAAVVDMVLSMRAEIVDCCFMTELNFLNGRSKLPAGKVYSLLNF.

It belongs to the purine/pyrimidine phosphoribosyltransferase family. Homodimer.

It is found in the cytoplasm. It carries out the reaction AMP + diphosphate = 5-phospho-alpha-D-ribose 1-diphosphate + adenine. The protein operates within purine metabolism; AMP biosynthesis via salvage pathway; AMP from adenine: step 1/1. Catalyzes a salvage reaction resulting in the formation of AMP, that is energically less costly than de novo synthesis. In Pelobacter propionicus (strain DSM 2379 / NBRC 103807 / OttBd1), this protein is Adenine phosphoribosyltransferase.